We begin with the raw amino-acid sequence, 563 residues long: Arginine--tRNA ligase (563 aa).

The 'HIGH' region signature appears at 108–118 (PNVAKEMHVGH).

Belongs to the class-I aminoacyl-tRNA synthetase family. In terms of assembly, monomer.

The protein localises to the cytoplasm. The catalysed reaction is tRNA(Arg) + L-arginine + ATP = L-arginyl-tRNA(Arg) + AMP + diphosphate. The protein is Arginine--tRNA ligase (argS) of Pasteurella multocida (strain Pm70).